The sequence spans 744 residues: Kinesin-like protein KIF2A (744 aa).

The segment at 66–186 is disordered; the sequence is LVPDEEIEPS…QQELREKRAQ (121 aa). At serine 75 the chain carries Phosphoserine. Phosphothreonine occurs at positions 78 and 97. Serine 100 carries the phosphoserine modification. Lysine 102 is modified (N6-acetyllysine). Residues 123-140 are compositionally biased toward polar residues; it reads FPEQSSSAQQNGSVSDIS. Serine 135 and serine 140 each carry phosphoserine. Residues 154 to 187 are a coiled coil; sequence RRKSNCVKEVEKLQEKREKRRLQQQELREKRAQD. The span at 159–186 shows a compositional bias: basic and acidic residues; the sequence is CVKEVEKLQEKREKRRLQQQELREKRAQ. Residues 223–553 form the Kinesin motor domain; sequence RICVCVRKRP…LRYANRVKEF (331 aa). Residue 313–320 coordinates ATP; that stretch reads GQTGSGKT. The stretch at 698-737 forms a coiled coil; it reads ATQLEAILEQKIDILTELRDKVKSFRAALQEEEQASKQIN.

The protein belongs to the TRAFAC class myosin-kinesin ATPase superfamily. Kinesin family. MCAK/KIF2 subfamily. Interacts with AURKA and PLK1. Interacts with PSRC1. Interacts with MCRS1; the interaction enhances recruitment of KIF2A to the minus ends of spindle microtubules which promotes chromosome alignment.

Its subcellular location is the cytoplasm. It localises to the cytoskeleton. The protein resides in the microtubule organizing center. The protein localises to the centrosome. It is found in the spindle pole. Its subcellular location is the spindle. Plus end-directed microtubule-dependent motor required for normal brain development. May regulate microtubule dynamics during axonal growth. Required for normal progression through mitosis. Required for normal congress of chromosomes at the metaphase plate. Required for normal spindle dynamics during mitosis. Promotes spindle turnover. Implicated in formation of bipolar mitotic spindles. Has microtubule depolymerization activity. The sequence is that of Kinesin-like protein KIF2A from Pongo abelii (Sumatran orangutan).